A 467-amino-acid chain; its full sequence is Putative odorant receptor 85e (467 aa).

The Cytoplasmic portion of the chain corresponds to 1–60 (MASLQFHGNVDADIRYDISLDPARESNLFRLLMGLQLANGTKPSPRLPKWWPKRLEMIGK). Residues 61-81 (VLPKAYCSMVIFTSLHLGVLF) form a helical membrane-spanning segment. The Extracellular portion of the chain corresponds to 82–98 (TKTTLDVLPTGELQAIT). The chain crosses the membrane as a helical span at residues 99–119 (DALTMTIIYFFTGYGTIYWCL). Residues 120–159 (RSRRLLAYMEHMNREYRHHSLAGVTFVSSHAAFRMSRNFT) are Cytoplasmic-facing. Residues 160-180 (VVWIMSCLLGVISWGVSPLML) traverse the membrane as a helical segment. Over 181–212 (GIRMLPLQCWYPFDALGPGTYTAVYATQLFGQ) the chain is Extracellular. A helical transmembrane segment spans residues 213-233 (IMVGMTFGFGGSLFVTLSLLL). Residues 234–286 (LGQFDVLYCSLKNLDAHTKLLGGESVNGLSSLQEELLLGDSKRELNQYVLLQE) lie on the Cytoplasmic side of the membrane. The helical transmembrane segment at 287 to 307 (HPTDLLRLSAGRKCPDQGNAF) threads the bilayer. Residues 308 to 334 (HNALVECIRLHRFILHCSQELENLFSP) are Extracellular-facing. A helical transmembrane segment spans residues 335–355 (YCLVKSLQITFQLCLLVFVGV). Over 356–367 (SGTREVLRIVNQ) the chain is Cytoplasmic. Residues 368 to 388 (LQYLGLTIFELLMFTYCGELL) traverse the membrane as a helical segment. Over 389-467 (SRHSIRSGDA…LAAKKTESEL (79 aa)) the chain is Extracellular.

This sequence belongs to the insect chemoreceptor superfamily. Heteromeric odorant receptor channel (TC 1.A.69) family. Or2a subfamily. As to quaternary structure, interacts with Orco. Complexes exist early in the endomembrane system in olfactory sensory neurons (OSNs), coupling these complexes to the conserved ciliary trafficking pathway. In terms of tissue distribution, expressed in 15% of the 120 sensory neurons within the maxillary palp.

The protein resides in the cell membrane. Functionally, odorant receptor which mediates acceptance or avoidance behavior, depending on its substrates. The odorant receptor repertoire encodes a large collection of odor stimuli that vary widely in identity, intensity, and duration. May form a complex with Orco to form odorant-sensing units, providing sensitive and prolonged odorant signaling and calcium permeability. The sequence is that of Putative odorant receptor 85e (Or85e) from Drosophila melanogaster (Fruit fly).